Here is a 103-residue protein sequence, read N- to C-terminus: Large ribosomal subunit protein bL21 (103 aa).

Belongs to the bacterial ribosomal protein bL21 family. As to quaternary structure, part of the 50S ribosomal subunit. Contacts protein L20.

This protein binds to 23S rRNA in the presence of protein L20. This chain is Large ribosomal subunit protein bL21, found in Delftia acidovorans (strain DSM 14801 / SPH-1).